Reading from the N-terminus, the 85-residue chain is Large ribosomal subunit protein bL27 (85 aa).

Belongs to the bacterial ribosomal protein bL27 family.

The polypeptide is Large ribosomal subunit protein bL27 (Campylobacter fetus subsp. fetus (strain 82-40)).